The following is a 756-amino-acid chain: Anaphase-promoting complex subunit 5 (756 aa).

4 TPR repeats span residues 301-334 (RYAA…AQES), 522-555 (DGRY…KAQN), 581-614 (ISVL…SREY), and 678-711 (YSQQ…EQLR).

The protein belongs to the APC5 family. In terms of assembly, the APC/C is composed of at least 12 subunits.

It is found in the nucleus. The protein localises to the cytoplasm. The protein resides in the cytoskeleton. Its subcellular location is the spindle. The protein operates within protein modification; protein ubiquitination. Functionally, component of the anaphase promoting complex/cyclosome (APC/C), a cell cycle-regulated E3 ubiquitin ligase that controls progression through mitosis and the G1 phase of the cell cycle. The APC/C complex acts by mediating ubiquitination and subsequent degradation of target proteins: it mainly mediates the formation of 'Lys-11'-linked polyubiquitin chains and, to a lower extent, the formation of 'Lys-48'- and 'Lys-63'-linked polyubiquitin chains. The APC/C complex catalyzes assembly of branched 'Lys-11'-/'Lys-48'-linked branched ubiquitin chains on target proteins. This Gallus gallus (Chicken) protein is Anaphase-promoting complex subunit 5 (ANAPC5).